Reading from the N-terminus, the 114-residue chain is Non-specific lipid-transfer protein 2 (114 aa).

A signal peptide spans 1 to 23; it reads MEMVNKIACFVLLCMVVVAPHAE. Cystine bridges form between cysteine 27-cysteine 73, cysteine 37-cysteine 50, cysteine 51-cysteine 96, and cysteine 71-cysteine 110.

It belongs to the plant LTP family.

In terms of biological role, plant non-specific lipid-transfer proteins transfer phospholipids as well as galactolipids across membranes. May play a role in wax or cutin deposition in the cell walls of expanding epidermal cells and certain secretory tissues. The polypeptide is Non-specific lipid-transfer protein 2 (Solanum chilense (Tomato)).